Consider the following 286-residue polypeptide: Bark leucoagglutinin (286 aa).

Residues 1-28 (ATSNSKPTQVLLATFLTFFFLLLNNVNS) form the signal peptide. Tyr73 contributes to the N-acetyl-alpha-neuraminyl-(2-&gt;3)-beta-D-galactosyl-(1-&gt;4)-beta-D-glucose binding site. N-linked (GlcNAc...) asparagine glycosylation is present at Asn89. Residues Asp115 and Lys135 each coordinate N-acetyl-alpha-neuraminyl-(2-&gt;3)-beta-D-galactosyl-(1-&gt;4)-beta-D-glucose. Asn141 is a glycosylation site (N-linked (GlcNAc...) asparagine). 2 residues coordinate Mn(2+): Glu155 and Asp157. Residues Asp157, Tyr159, Asp165, and Asp168 each contribute to the Ca(2+) site. N-acetyl-alpha-neuraminyl-(2-&gt;3)-beta-D-galactosyl-(1-&gt;4)-beta-D-glucose contacts are provided by Tyr159 and Asp165. Residues Asp168 and His173 each coordinate Mn(2+). Residues Asn207 and Asn219 are each glycosylated (N-linked (GlcNAc...) asparagine). Residues 278–286 (NVHIARYTA) constitute a propeptide, removed in mature form.

It belongs to the leguminous lectin family.

Sialic acid-binding lectin specifically recognizing the trisaccharide sequence Neu5Ac/Gc-alpha-2,3-Gal-beta-1,4-GlcNAc/Glc. This Maackia amurensis (Amur maackia) protein is Bark leucoagglutinin.